Reading from the N-terminus, the 385-residue chain is S-adenosylmethionine synthase (385 aa).

Position 16 (His16) interacts with ATP. Residue Asp18 participates in Mg(2+) binding. Glu44 is a binding site for K(+). Glu57 and Gln100 together coordinate L-methionine. The flexible loop stretch occupies residues 100–110 (QSPDINQGVDR). Residues 164–166 (DGK), 230–231 (KF), Asp239, 245–246 (RK), Ala262, and Lys266 each bind ATP. Asp239 provides a ligand contact to L-methionine. Lys270 lines the L-methionine pocket.

It belongs to the AdoMet synthase family. In terms of assembly, homotetramer; dimer of dimers. Mg(2+) serves as cofactor. The cofactor is K(+).

Its subcellular location is the cytoplasm. The catalysed reaction is L-methionine + ATP + H2O = S-adenosyl-L-methionine + phosphate + diphosphate. The protein operates within amino-acid biosynthesis; S-adenosyl-L-methionine biosynthesis; S-adenosyl-L-methionine from L-methionine: step 1/1. Catalyzes the formation of S-adenosylmethionine (AdoMet) from methionine and ATP. The overall synthetic reaction is composed of two sequential steps, AdoMet formation and the subsequent tripolyphosphate hydrolysis which occurs prior to release of AdoMet from the enzyme. The polypeptide is S-adenosylmethionine synthase (Helicobacter acinonychis (strain Sheeba)).